A 369-amino-acid polypeptide reads, in one-letter code: Peptidyl-prolyl cis-trans isomerase D (369 aa).

In terms of domain architecture, PPIase cyclophilin-type spans tyrosine 7 to glutamate 175. TPR repeat units follow at residues valine 217–tyrosine 250, leucine 268–aspartate 301, and threonine 306–aspartate 339.

The protein belongs to the cyclophilin-type PPIase family. PPIase D subfamily.

The protein localises to the cytoplasm. The enzyme catalyses [protein]-peptidylproline (omega=180) = [protein]-peptidylproline (omega=0). In terms of biological role, PPIases accelerate the folding of proteins. It catalyzes the cis-trans isomerization of proline imidic peptide bonds in oligopeptides. This chain is Peptidyl-prolyl cis-trans isomerase D (CPR6), found in Candida albicans (strain SC5314 / ATCC MYA-2876) (Yeast).